The following is a 597-amino-acid chain: Bile salt-activated lipase (597 aa).

Residues 1-18 (LGASRLGPSPGCLAVASA) form the signal peptide. The cysteines at positions 82 and 98 are disulfide-linked. An N-linked (GlcNAc...) asparagine glycan is attached at Asn-205. The Acyl-ester intermediate role is filled by Ser-212. The cysteines at positions 264 and 275 are disulfide-linked. The active-site Charge relay system is the Asp-338. The N-linked (GlcNAc...) asparagine glycan is linked to Asn-379. The active-site Charge relay system is the His-453. The interval 553–591 (AGASLLPPEDNSQASPVPPADNSGAPTEPSAGDSEVAQM) is disordered.

Belongs to the type-B carboxylesterase/lipase family. In terms of assembly, interacts with CLC.

It localises to the secreted. The catalysed reaction is a triacylglycerol + H2O = a diacylglycerol + a fatty acid + H(+). It catalyses the reaction 1,2,3-tri-(9Z-octadecenoyl)-glycerol + H2O = di-(9Z)-octadecenoylglycerol + (9Z)-octadecenoate + H(+). The enzyme catalyses 1,2,3-trioctanoylglycerol + H2O = dioctanoylglycerol + octanoate + H(+). It carries out the reaction a sterol ester + H2O = a sterol + a fatty acid + H(+). The catalysed reaction is cholesteryl (9Z-octadecenoate) + H2O = cholesterol + (9Z)-octadecenoate + H(+). It catalyses the reaction an acetyl ester + H2O = an aliphatic alcohol + acetate + H(+). The enzyme catalyses a butanoate ester + H2O = an aliphatic alcohol + butanoate + H(+). It carries out the reaction 9-hexadecanoyloxy-octadecanoate + H2O = 9-hydroxy-octadecanoate + hexadecanoate + H(+). The catalysed reaction is 9-(9Z-octadecenoyloxy)-octadecanoate + H2O = 9-hydroxy-octadecanoate + (9Z)-octadecenoate + H(+). It catalyses the reaction 1-hexadecanoyl-sn-glycero-3-phosphocholine + H2O = sn-glycerol 3-phosphocholine + hexadecanoate + H(+). The enzyme catalyses 12-hexadecanoyloxy-octadecanoate + H2O = 12-hydroxyoctadecanoate + hexadecanoate + H(+). It carries out the reaction 12-(9Z-octadecenoyloxy)-octadecanoate + H2O = 12-hydroxyoctadecanoate + (9Z)-octadecenoate + H(+). The catalysed reaction is 13-(9Z-octadecenoyloxy)-octadecanoate + H2O = 13-hydroxy-octadecanoate + (9Z)-octadecenoate + H(+). It catalyses the reaction 9-(9Z-hexadecenoyloxy)-octadecanoate + H2O = (9Z)-hexadecenoate + 9-hydroxy-octadecanoate + H(+). The enzyme catalyses 12-(9Z-hexadecenoyloxy)-octadecanoate + H2O = 12-hydroxyoctadecanoate + (9Z)-hexadecenoate + H(+). It carries out the reaction 13-(9Z-hexadecenoyloxy)-octadecanoate + H2O = 13-hydroxy-octadecanoate + (9Z)-hexadecenoate + H(+). The catalysed reaction is 12-octadecanoyloxy-octadecanoate + H2O = 12-hydroxyoctadecanoate + octadecanoate + H(+). It catalyses the reaction 13-octadecanoyloxy-octadecanoate + H2O = 13-hydroxy-octadecanoate + octadecanoate + H(+). The enzyme catalyses 5-(9Z-hexadecenoyloxy)-octadecanoate + H2O = 5-hydroxy-octadecanoate + (9Z)-hexadecenoate + H(+). It carries out the reaction 9-octadecanoyloxy-octadecanoate + H2O = 9-hydroxy-octadecanoate + octadecanoate + H(+). With respect to regulation, activated by bile salts such as sodium taurocholate. Functionally, catalyzes the hydrolysis of a wide range of substrates including cholesteryl esters, phospholipids, lysophospholipids, di- and tri-acylglycerols, and fatty acid esters of hydroxy fatty acids (FAHFA). Preferentially hydrolyzes FAHFAs with the ester bond further away from the carboxylate. Unsaturated FAHFAs are hydrolyzed more quickly than saturated FAHFAs. Has an essential role in the complete digestion of dietary lipids and their intestinal absorption, along with the absorption of fat-soluble vitamins. The protein is Bile salt-activated lipase (CEL) of Bos taurus (Bovine).